Here is a 286-residue protein sequence, read N- to C-terminus: 4-diphosphocytidyl-2-C-methyl-D-erythritol kinase (286 aa).

Lys13 is a catalytic residue. 101–111 (PQGAGLGGGSS) is an ATP binding site. The active site involves Asp143.

Belongs to the GHMP kinase family. IspE subfamily.

The enzyme catalyses 4-CDP-2-C-methyl-D-erythritol + ATP = 4-CDP-2-C-methyl-D-erythritol 2-phosphate + ADP + H(+). It participates in isoprenoid biosynthesis; isopentenyl diphosphate biosynthesis via DXP pathway; isopentenyl diphosphate from 1-deoxy-D-xylulose 5-phosphate: step 3/6. In terms of biological role, catalyzes the phosphorylation of the position 2 hydroxy group of 4-diphosphocytidyl-2C-methyl-D-erythritol. This Idiomarina loihiensis (strain ATCC BAA-735 / DSM 15497 / L2-TR) protein is 4-diphosphocytidyl-2-C-methyl-D-erythritol kinase.